Consider the following 248-residue polypeptide: MLQAASALRHAKRILVITGAGLSADSGLPTYRGVGGLYNGETEDGLPIEMALSGPMLRRDPELCWKYIAELGKACLGGEPNVAHYAIAQLQRIKPECWVLTQNVDGYHRAAGSPPERLIEIHGQLSPLFCQSCAAQDPQLSEHLQRPLPPLCRLCGGILRPPVVLFQEMLPERALETLYEQLATGYDAVLSIGTTASFPYIHEPVIRTRVSGGFTAEINPQPTDHSAQMDVFLQCRAAHVMAELISHI.

Residues 1-248 (MLQAASALRH…HVMAELISHI (248 aa)) enclose the Deacetylase sirtuin-type domain. NAD(+) contacts are provided by residues 19–38 (GAGL…GGLY) and 102–105 (QNVD). The active-site Proton acceptor is the His-122. 4 residues coordinate Zn(2+): Cys-130, Cys-133, Cys-152, and Cys-155. NAD(+) contacts are provided by residues 193–195 (GTT), 219–221 (NPQ), and Ala-237.

The protein belongs to the sirtuin family. Class III subfamily. Zn(2+) is required as a cofactor.

The protein resides in the cytoplasm. The enzyme catalyses N(6)-acetyl-L-lysyl-[protein] + NAD(+) + H2O = 2''-O-acetyl-ADP-D-ribose + nicotinamide + L-lysyl-[protein]. In terms of biological role, NAD-dependent protein deacetylase which modulates the activities of several proteins which are inactive in their acetylated form. This is NAD-dependent protein deacylase 2 (cobB2) from Pseudomonas syringae pv. tomato (strain ATCC BAA-871 / DC3000).